We begin with the raw amino-acid sequence, 20 residues long: Hemocyanin subunit Ib (20 aa).

A disordered region spans residues 1–20; it reads DSVGSTTAHKQQNINHLLDK.

This sequence belongs to the tyrosinase family. Hemocyanin subfamily. In terms of assembly, composed of 3 major subunits (IB, II and III) and 1 minor subunit (IA) which form homohexamers and heterohexamers. May also form larger structures. Hemolymph.

It is found in the secreted. Its subcellular location is the extracellular space. Hemocyanins are copper-containing oxygen carriers occurring freely dissolved in the hemolymph of many mollusks and arthropods. The polypeptide is Hemocyanin subunit Ib (Panulirus japonicus (Japanese spiny lobster)).